Here is a 291-residue protein sequence, read N- to C-terminus: Cell division control protein 2 homolog 1 (291 aa).

A Protein kinase domain is found at 1-284; the sequence is GENVEKIGEG…ARSAVEHEYF (284 aa). ATP is bound by residues 7 to 15 and lysine 30; that span reads IGEGTYGVV. Threonine 11 is modified (phosphothreonine). The residue at position 12 (tyrosine 12) is a Phosphotyrosine. The active-site Proton acceptor is aspartate 124. The residue at position 158 (threonine 158) is a Phosphothreonine; by CAK.

It belongs to the protein kinase superfamily. CMGC Ser/Thr protein kinase family. CDC2/CDKX subfamily. Found in most organs including root, young leaf, stem, vegetative meristem and flower bud.

The catalysed reaction is L-seryl-[protein] + ATP = O-phospho-L-seryl-[protein] + ADP + H(+). It catalyses the reaction L-threonyl-[protein] + ATP = O-phospho-L-threonyl-[protein] + ADP + H(+). The enzyme catalyses [DNA-directed RNA polymerase] + ATP = phospho-[DNA-directed RNA polymerase] + ADP + H(+). Its activity is regulated as follows. Phosphorylation at Thr-11 or Tyr-12 inactivates the enzyme, while phosphorylation at Thr-158 activates it. Plays a key role in the control of the eukaryotic cell cycle. Component of the kinase complex that phosphorylates the repetitive C-terminus of RNA polymerase II. The sequence is that of Cell division control protein 2 homolog 1 (CDC2A) from Medicago sativa (Alfalfa).